Here is a 119-residue protein sequence, read N- to C-terminus: Large ribosomal subunit protein bL17 (119 aa).

This sequence belongs to the bacterial ribosomal protein bL17 family. As to quaternary structure, part of the 50S ribosomal subunit. Contacts protein L32.

This Psychrobacter sp. (strain PRwf-1) protein is Large ribosomal subunit protein bL17.